The sequence spans 124 residues: Small ribosomal subunit protein uS12c (124 aa).

Belongs to the universal ribosomal protein uS12 family. In terms of assembly, part of the 30S ribosomal subunit.

It localises to the plastid. Its subcellular location is the chloroplast. Functionally, with S4 and S5 plays an important role in translational accuracy. Located at the interface of the 30S and 50S subunits. The sequence is that of Small ribosomal subunit protein uS12c (rps12) from Ostreococcus tauri.